A 76-amino-acid polypeptide reads, in one-letter code: Conotoxin Ca11b (76 aa).

Positions 1 to 19 are cleaved as a signal peptide; the sequence is MKLVLAIVVILMLLSLSTG. Positions 20–42 are excised as a propeptide; it reads AEMSDNHASMSANALRDRLLGPK. Disulfide bonds link cysteine 46/cysteine 60, cysteine 53/cysteine 65, cysteine 59/cysteine 69, and cysteine 64/cysteine 76.

Expressed by the venom duct.

The protein resides in the secreted. This is Conotoxin Ca11b from Conus caracteristicus (Characteristic cone).